We begin with the raw amino-acid sequence, 122 residues long: Large ribosomal subunit protein uL14c (122 aa).

The protein belongs to the universal ribosomal protein uL14 family. Part of the 50S ribosomal subunit.

It localises to the plastid. It is found in the chloroplast. Binds to 23S rRNA. The polypeptide is Large ribosomal subunit protein uL14c (Ipomoea purpurea (Common morning glory)).